A 379-amino-acid chain; its full sequence is Alanine racemase (379 aa).

The active-site Proton acceptor; specific for D-alanine is the Lys41. An N6-(pyridoxal phosphate)lysine modification is found at Lys41. Arg138 provides a ligand contact to substrate. Tyr260 serves as the catalytic Proton acceptor; specific for L-alanine. Met319 serves as a coordination point for substrate.

It belongs to the alanine racemase family. It depends on pyridoxal 5'-phosphate as a cofactor.

It carries out the reaction L-alanine = D-alanine. Its pathway is amino-acid biosynthesis; D-alanine biosynthesis; D-alanine from L-alanine: step 1/1. Functionally, catalyzes the interconversion of L-alanine and D-alanine. May also act on other amino acids. This is Alanine racemase (alr) from Rhizobium meliloti (strain 1021) (Ensifer meliloti).